The sequence spans 191 residues: dTTP/UTP pyrophosphatase (191 aa).

Residue Asp75 is the Proton acceptor of the active site.

This sequence belongs to the Maf family. YhdE subfamily. A divalent metal cation serves as cofactor.

The protein resides in the cytoplasm. The catalysed reaction is dTTP + H2O = dTMP + diphosphate + H(+). It carries out the reaction UTP + H2O = UMP + diphosphate + H(+). Its function is as follows. Nucleoside triphosphate pyrophosphatase that hydrolyzes dTTP and UTP. May have a dual role in cell division arrest and in preventing the incorporation of modified nucleotides into cellular nucleic acids. The sequence is that of dTTP/UTP pyrophosphatase from Aliivibrio fischeri (strain ATCC 700601 / ES114) (Vibrio fischeri).